A 164-amino-acid polypeptide reads, in one-letter code: ATP synthase subunit b (164 aa).

A helical transmembrane segment spans residues 10–30 (LLISQIVNFCLLAFLLNTFLY).

This sequence belongs to the ATPase B chain family. F-type ATPases have 2 components, F(1) - the catalytic core - and F(0) - the membrane proton channel. F(1) has five subunits: alpha(3), beta(3), gamma(1), delta(1), epsilon(1). F(0) has three main subunits: a(1), b(2) and c(10-14). The alpha and beta chains form an alternating ring which encloses part of the gamma chain. F(1) is attached to F(0) by a central stalk formed by the gamma and epsilon chains, while a peripheral stalk is formed by the delta and b chains.

The protein localises to the cell membrane. In terms of biological role, f(1)F(0) ATP synthase produces ATP from ADP in the presence of a proton or sodium gradient. F-type ATPases consist of two structural domains, F(1) containing the extramembraneous catalytic core and F(0) containing the membrane proton channel, linked together by a central stalk and a peripheral stalk. During catalysis, ATP synthesis in the catalytic domain of F(1) is coupled via a rotary mechanism of the central stalk subunits to proton translocation. Component of the F(0) channel, it forms part of the peripheral stalk, linking F(1) to F(0). This Herpetosiphon aurantiacus (strain ATCC 23779 / DSM 785 / 114-95) protein is ATP synthase subunit b.